The primary structure comprises 699 residues: Zinc finger protein 782 (699 aa).

The KRAB domain occupies 8–79; sequence VSFQDVTVEF…EKEKGFLSRN (72 aa). The tract at residues 75–95 is disordered; sequence FLSRNSPEDSQPDEISEKSPE. The C2H2-type 1; degenerate zinc-finger motif lies at 279–307; that stretch reads CFCRITHKTLTGGKSFSQKSHIREHHRVH. Residues 316-332 form a C2H2-type 2; degenerate zinc finger; the sequence is GKSFNRNSTLPVHQRTH. Residues 337-360 form a C2H2-type 3; degenerate zinc finger; that stretch reads YSDYHPCTETFSYQSTFSVHQKVH. Residues 366-388 form a C2H2-type 4; degenerate zinc finger; the sequence is YEYNECGKSCSMNSHLIWPQKSH. 11 C2H2-type zinc fingers span residues 394–416, 422–444, 450–472, 478–500, 506–528, 534–556, 562–584, 590–612, 618–640, 646–668, and 674–696; these read YECPECGKAFSEKSRLRKHQRTH, YKCDGCDKAFSAKSGLRIHQRTH, FECHECGKSFNYKSILIVHQRTH, FECNECGKSFSHMSGLRNHRRTH, YKCDECGKAFKLKSGLRKHHRTH, YKCNQCGKAFGQKSQLRGHHRIH, YKCNHCGEAFSQKSNLRVHHRTH, YQCEECGKTFRQKSNLRGHQRTH, YECNECGKAFSEKSVLRKHQRTH, YNCNQCGEAFSQKSNLRVHQRTH, and YKCDKCGRTFSQKSSLREHQKAH.

Belongs to the krueppel C2H2-type zinc-finger protein family.

It is found in the nucleus. Its function is as follows. May be involved in transcriptional regulation. In Homo sapiens (Human), this protein is Zinc finger protein 782 (ZNF782).